A 648-amino-acid polypeptide reads, in one-letter code: Replication restart protein PriA (648 aa).

The 167-residue stretch at 131–297 (TILNESNKPT…EIGKYQLVTL (167 aa)) folds into the Helicase ATP-binding domain. Residue 144–151 (GVTGSGKT) participates in ATP binding. The DEAH box motif lies at 240-243 (DEEH). C358, C361, C367, C370, C385, C388, C398, and C401 together coordinate Zn(2+). The Helicase C-terminal domain maps to 393-548 (KIFSSCPECL…SFFANELEIR (156 aa)).

The protein belongs to the helicase family. PriA subfamily. In terms of assembly, component of the replication restart primosome. Zn(2+) is required as a cofactor.

It catalyses the reaction Couples ATP hydrolysis with the unwinding of duplex DNA by translocating in the 3'-5' direction.. The catalysed reaction is ATP + H2O = ADP + phosphate + H(+). Its function is as follows. Initiates the restart of stalled replication forks, which reloads the replicative helicase on sites other than the origin of replication. Recognizes and binds to abandoned replication forks and remodels them to uncover a helicase loading site. Promotes assembly of the primosome at these replication forks. The protein is Replication restart protein PriA of Rickettsia felis (strain ATCC VR-1525 / URRWXCal2) (Rickettsia azadi).